The primary structure comprises 65 residues: Large ribosomal subunit protein uL29 (65 aa).

The protein belongs to the universal ribosomal protein uL29 family.

This chain is Large ribosomal subunit protein uL29, found in Lactobacillus helveticus (strain DPC 4571).